The following is a 90-amino-acid chain: uncharacterized protein (90 aa).

Residues 13-34 (APEGMGPHHAASSSHHSAQHHH) are disordered. The chain crosses the membrane as a helical span at residues 52-72 (YKMWFLYALILALIFGVFMWW).

It localises to the host membrane. This is an uncharacterized protein from Invertebrate iridescent virus 3 (IIV-3).